The chain runs to 86 residues: Small ribosomal subunit protein uS17 (86 aa).

It belongs to the universal ribosomal protein uS17 family. Part of the 30S ribosomal subunit.

Functionally, one of the primary rRNA binding proteins, it binds specifically to the 5'-end of 16S ribosomal RNA. The protein is Small ribosomal subunit protein uS17 of Caldicellulosiruptor bescii (strain ATCC BAA-1888 / DSM 6725 / KCTC 15123 / Z-1320) (Anaerocellum thermophilum).